We begin with the raw amino-acid sequence, 217 residues long: UPF0323 lipoprotein HPP12_0232 (217 aa).

The first 27 residues, Met-1–Gly-27, serve as a signal peptide directing secretion. The N-palmitoyl cysteine moiety is linked to residue Cys-28. Cys-28 carries the S-diacylglycerol cysteine lipid modification. The span at Gln-160–Arg-171 shows a compositional bias: polar residues. The interval Gln-160–Ser-217 is disordered. Residues Ser-172–Ser-185 show a composition bias toward low complexity. A compositionally biased stretch (polar residues) spans Met-186–Phe-197. Low complexity predominate over residues Ser-199–Ser-210.

This sequence belongs to the UPF0323 family.

Its subcellular location is the cell membrane. This chain is UPF0323 lipoprotein HPP12_0232, found in Helicobacter pylori (strain P12).